We begin with the raw amino-acid sequence, 533 residues long: Peptidyl-prolyl cis-trans isomerase-like 2 (533 aa).

Residues 38 to 111 form the U-box domain; that stretch reads KRLPFYCCSL…DEYFCPVTYK (74 aa). The region spanning 284-438 is the PPIase cyclophilin-type domain; the sequence is KKSYARIITN…REIKIKQIQM (155 aa). Positions 443–519 form a coiled coil; that stretch reads FEEYQRRLKN…SNEGEELQKK (77 aa). The span at 454–477 shows a compositional bias: basic and acidic residues; that stretch reads LTHEANAERENEEMRKRREKEEKM. The tract at residues 454–533 is disordered; that stretch reads LTHEANAERE…KTTFGNFDNF (80 aa). Positions 523-533 are enriched in polar residues; it reads TKTTFGNFDNF.

It belongs to the cyclophilin-type PPIase family. PPIL2 subfamily.

It localises to the nucleus. The enzyme catalyses [protein]-peptidylproline (omega=180) = [protein]-peptidylproline (omega=0). It carries out the reaction S-ubiquitinyl-[E2 ubiquitin-conjugating enzyme]-L-cysteine + [acceptor protein]-L-lysine = [E2 ubiquitin-conjugating enzyme]-L-cysteine + N(6)-ubiquitinyl-[acceptor protein]-L-lysine.. It functions in the pathway protein modification; protein ubiquitination. Its function is as follows. May catalyze the cis-trans isomerization of proline imidic peptide bonds in oligopeptides thereby assisting the folding of proteins. May also function as a chaperone, playing a role in intracellular transport of proteins. May also have a protein ubiquitin ligase activity acting as an E3 ubiquitin protein ligase or as a ubiquitin-ubiquitin ligase promoting elongation of ubiquitin chains on proteins. This chain is Peptidyl-prolyl cis-trans isomerase-like 2 (cyp14), found in Rhizopus delemar (strain RA 99-880 / ATCC MYA-4621 / FGSC 9543 / NRRL 43880) (Mucormycosis agent).